Consider the following 177-residue polypeptide: ATP synthase subunit b (177 aa).

The chain crosses the membrane as a helical span at residues 35–55 (FFVVLAIFLIVLAVIGTFVVP).

This sequence belongs to the ATPase B chain family. F-type ATPases have 2 components, F(1) - the catalytic core - and F(0) - the membrane proton channel. F(1) has five subunits: alpha(3), beta(3), gamma(1), delta(1), epsilon(1). F(0) has three main subunits: a(1), b(2) and c(10-14). The alpha and beta chains form an alternating ring which encloses part of the gamma chain. F(1) is attached to F(0) by a central stalk formed by the gamma and epsilon chains, while a peripheral stalk is formed by the delta and b chains.

The protein localises to the cell membrane. In terms of biological role, f(1)F(0) ATP synthase produces ATP from ADP in the presence of a proton or sodium gradient. F-type ATPases consist of two structural domains, F(1) containing the extramembraneous catalytic core and F(0) containing the membrane proton channel, linked together by a central stalk and a peripheral stalk. During catalysis, ATP synthesis in the catalytic domain of F(1) is coupled via a rotary mechanism of the central stalk subunits to proton translocation. Component of the F(0) channel, it forms part of the peripheral stalk, linking F(1) to F(0). The protein is ATP synthase subunit b of Mycobacteroides abscessus (strain ATCC 19977 / DSM 44196 / CCUG 20993 / CIP 104536 / JCM 13569 / NCTC 13031 / TMC 1543 / L948) (Mycobacterium abscessus).